A 103-amino-acid polypeptide reads, in one-letter code: UPF0473 protein SGO_2040 (103 aa).

It belongs to the UPF0473 family.

The protein is UPF0473 protein SGO_2040 of Streptococcus gordonii (strain Challis / ATCC 35105 / BCRC 15272 / CH1 / DL1 / V288).